We begin with the raw amino-acid sequence, 192 residues long: 3-hydroxyanthranilate 3,4-dioxygenase 1 (192 aa).

Residue Arg-50 coordinates O2. Residues His-54, Glu-60, and His-102 each contribute to the Fe cation site. A substrate-binding site is contributed by Glu-60. Residues Arg-106 and Glu-116 each coordinate substrate. Cys-131, Cys-134, Cys-168, and Cys-171 together coordinate a divalent metal cation.

The protein belongs to the 3-HAO family. Fe(2+) is required as a cofactor.

The protein resides in the cytoplasm. It carries out the reaction 3-hydroxyanthranilate + O2 = (2Z,4Z)-2-amino-3-carboxymuconate 6-semialdehyde. Its pathway is cofactor biosynthesis; NAD(+) biosynthesis; quinolinate from L-kynurenine: step 3/3. Functionally, catalyzes the oxidative ring opening of 3-hydroxyanthranilate to 2-amino-3-carboxymuconate semialdehyde, which spontaneously cyclizes to quinolinate. In Aspergillus oryzae (strain ATCC 42149 / RIB 40) (Yellow koji mold), this protein is 3-hydroxyanthranilate 3,4-dioxygenase 1 (bna1-1).